The sequence spans 347 residues: Fructose-1,6-bisphosphatase class 1 (347 aa).

Mg(2+) is bound by residues Glu-106, Asp-128, Ile-130, and Asp-131. Residues 131-134 (DGSS), Asn-223, Tyr-251, and Lys-281 contribute to the substrate site. Glu-287 contributes to the Mg(2+) binding site.

This sequence belongs to the FBPase class 1 family. As to quaternary structure, homotetramer. The cofactor is Mg(2+).

It is found in the cytoplasm. The enzyme catalyses beta-D-fructose 1,6-bisphosphate + H2O = beta-D-fructose 6-phosphate + phosphate. The protein operates within carbohydrate biosynthesis; Calvin cycle. The polypeptide is Fructose-1,6-bisphosphatase class 1 (Synechocystis sp. (strain ATCC 27184 / PCC 6803 / Kazusa)).